The primary structure comprises 474 residues: Glutamate--tRNA ligase 1 (474 aa).

The 'HIGH' region signature appears at 11–21 (PSPTGYLHIGG). A 'KMSKS' region motif is present at residues 240 to 244 (KLSKR). Position 243 (lysine 243) interacts with ATP.

Belongs to the class-I aminoacyl-tRNA synthetase family. Glutamate--tRNA ligase type 1 subfamily. As to quaternary structure, monomer.

Its subcellular location is the cytoplasm. The catalysed reaction is tRNA(Glu) + L-glutamate + ATP = L-glutamyl-tRNA(Glu) + AMP + diphosphate. In terms of biological role, catalyzes the attachment of glutamate to tRNA(Glu) in a two-step reaction: glutamate is first activated by ATP to form Glu-AMP and then transferred to the acceptor end of tRNA(Glu). The sequence is that of Glutamate--tRNA ligase 1 from Mesorhizobium japonicum (strain LMG 29417 / CECT 9101 / MAFF 303099) (Mesorhizobium loti (strain MAFF 303099)).